Consider the following 214-residue polypeptide: Sugar fermentation stimulation protein homolog (214 aa).

It belongs to the SfsA family.

The chain is Sugar fermentation stimulation protein homolog from Aquifex aeolicus (strain VF5).